Consider the following 423-residue polypeptide: MDRIVIQGGARLEGRIEISGAKNSALKLMAAALLTDEPVILTRMPRLADSRFLGHLLEKLGVEVSDGQDAQLRLHAATIADTFAPYDLVRKMRASFNVLGPLLAREGHARVSLPGGCAIGARPVDLHLKALKALGAQIEISEGYVSAKAPAGGLVGGEIDLPFASVGATEHAMLAASLARGETVIENAAREPEIGDLADCLTAMGATIEGAGSSTIRIQGQSRLSGVTHKVVADRIETATYALAVAAAGGDAVLEGAVLAHNKALWSSMGEAGVTVEAVADGVRVARNGSRLDSVDIETQPFPGFPTDAQAQFMALMSLANGSSVIRETIFENRFMHAPELARLGADITVHGNEAVVRGVERLRGAPVMATDLRASVSLVIAGLAAEGETVVNRVYHLDRGFERLEAKLTGCGARIERLPDGA.

A phosphoenolpyruvate-binding site is contributed by 22–23 (KN). Position 93 (arginine 93) interacts with UDP-N-acetyl-alpha-D-glucosamine. Cysteine 117 functions as the Proton donor in the catalytic mechanism. The residue at position 117 (cysteine 117) is a 2-(S-cysteinyl)pyruvic acid O-phosphothioketal. Residues 122 to 126 (RPVDL), aspartate 308, and isoleucine 330 contribute to the UDP-N-acetyl-alpha-D-glucosamine site.

Belongs to the EPSP synthase family. MurA subfamily.

It localises to the cytoplasm. The enzyme catalyses phosphoenolpyruvate + UDP-N-acetyl-alpha-D-glucosamine = UDP-N-acetyl-3-O-(1-carboxyvinyl)-alpha-D-glucosamine + phosphate. It functions in the pathway cell wall biogenesis; peptidoglycan biosynthesis. Its function is as follows. Cell wall formation. Adds enolpyruvyl to UDP-N-acetylglucosamine. The sequence is that of UDP-N-acetylglucosamine 1-carboxyvinyltransferase from Maricaulis maris (strain MCS10) (Caulobacter maris).